Here is a 274-residue protein sequence, read N- to C-terminus: NAD-dependent protein deacetylase (274 aa).

Residues 1-274 enclose the Deacetylase sirtuin-type domain; that stretch reads MDSRMSDLQA…CDEVLAEVVS (274 aa). NAD(+) contacts are provided by residues 26 to 46 and 104 to 107; these read GAGC…GQWK and QNVD. The Proton acceptor role is filled by H122. Zn(2+) is bound by residues C130, C133, C181, and C184. Residues 221 to 223, 247 to 249, and C265 contribute to the NAD(+) site; these read GSS and NLG.

Belongs to the sirtuin family. Class II subfamily. It depends on Zn(2+) as a cofactor.

Its subcellular location is the cytoplasm. It catalyses the reaction N(6)-acetyl-L-lysyl-[protein] + NAD(+) + H2O = 2''-O-acetyl-ADP-D-ribose + nicotinamide + L-lysyl-[protein]. In terms of biological role, NAD-dependent protein deacetylase which modulates the activities of several enzymes which are inactive in their acetylated form. The chain is NAD-dependent protein deacetylase from Bordetella bronchiseptica (strain ATCC BAA-588 / NCTC 13252 / RB50) (Alcaligenes bronchisepticus).